Reading from the N-terminus, the 109-residue chain is Preprofallaxidin-8 (109 aa).

The signal sequence occupies residues 1-22; the sequence is MASLKKSLFLVLFLGLLSLSIC. A propeptide spanning residues 23 to 46 is cleaved from the precursor; it reads EEQKRENEEDAEDENHEEESEEKR. The interval 27 to 46 is disordered; that stretch reads RENEEDAEDENHEEESEEKR. The segment covering 30-42 has biased composition (acidic residues); the sequence is EEDAEDENHEEES. Residue leucine 62 is modified to Leucine amide. A propeptide spanning residues 66 to 70 is cleaved from the precursor; sequence SEEKR. The residue at position 75 (methionine 75) is a Methionine amide. A propeptide spanning residues 79–83 is cleaved from the precursor; it reads SEEKR. Residue methionine 88 is modified to Methionine amide. 2 consecutive propeptides follow at residues 92–96 and alanine 108; that span reads SEEKR.

The protein belongs to the frog skin active peptide (FSAP) family. Brevinin subfamily. As to expression, expressed by the skin glands.

The protein localises to the secreted. Functionally, fallaxidin-2.1 shows no antibacterial activity against Gram-positive or Gram-negative bacteria. Does not inhibit the formation of NO by neuronal nitric oxide synthase. Has no effect on splenocyte proliferation or smooth muscle contraction. In terms of biological role, fallaxidin-3.2 shows antibacterial activity against the Gram-positive bacteria E.faecalis (MIC=100 uM) and L.lactis (MIC=500 uM). No antibacterial activity against the Gram-positive bacteria B.cereus, L.innocua, M.luteus, S.epidermidis, S.uberis and S.aureus, or the Gram-negative bacteria E.cloacae and E.coli. This chain is Preprofallaxidin-8, found in Litoria fallax (Eastern dwarf tree frog).